The following is a 207-amino-acid chain: uncharacterized protein (207 aa).

The next 5 membrane-spanning stretches (helical) occupy residues 28–48 (IAVL…IVFV), 59–79 (EGFI…FLIV), 112–132 (MFLL…VAGL), 140–160 (FILA…FIGY), and 165–185 (LITQ…LWYV).

The protein localises to the cell membrane. This is an uncharacterized protein from Bacillus subtilis (strain 168).